The following is a 209-amino-acid chain: Ribosomal RNA small subunit methyltransferase G (209 aa).

Residues Gly71, Phe76, 122–123 (AE), and Arg135 each bind S-adenosyl-L-methionine.

This sequence belongs to the methyltransferase superfamily. RNA methyltransferase RsmG family.

The protein localises to the cytoplasm. Specifically methylates the N7 position of a guanine in 16S rRNA. This chain is Ribosomal RNA small subunit methyltransferase G, found in Phocaeicola vulgatus (strain ATCC 8482 / DSM 1447 / JCM 5826 / CCUG 4940 / NBRC 14291 / NCTC 11154) (Bacteroides vulgatus).